The primary structure comprises 145 residues: Probable disulfide formation protein (145 aa).

The chain crosses the membrane as a helical span at residues glutamate 9–phenylalanine 28. Cysteines 38 and 41 form a disulfide. Helical transmembrane passes span tyrosine 43–lysine 62 and proline 69–leucine 86. An intrachain disulfide couples cysteine 100 to cysteine 106. A helical transmembrane segment spans residues glycine 115–isoleucine 137.

It belongs to the DsbB family. BdbC subfamily.

The protein localises to the cell membrane. Its function is as follows. Required for disulfide bond formation in some proteins. This chain is Probable disulfide formation protein, found in Oceanobacillus iheyensis (strain DSM 14371 / CIP 107618 / JCM 11309 / KCTC 3954 / HTE831).